Consider the following 314-residue polypeptide: 4-diphosphocytidyl-2-C-methyl-D-erythritol kinase (314 aa).

Residue Lys-11 is part of the active site. 99 to 109 (PMAAGLAGGST) serves as a coordination point for ATP. Asp-141 is an active-site residue.

The protein belongs to the GHMP kinase family. IspE subfamily.

The enzyme catalyses 4-CDP-2-C-methyl-D-erythritol + ATP = 4-CDP-2-C-methyl-D-erythritol 2-phosphate + ADP + H(+). It participates in isoprenoid biosynthesis; isopentenyl diphosphate biosynthesis via DXP pathway; isopentenyl diphosphate from 1-deoxy-D-xylulose 5-phosphate: step 3/6. In terms of biological role, catalyzes the phosphorylation of the position 2 hydroxy group of 4-diphosphocytidyl-2C-methyl-D-erythritol. The protein is 4-diphosphocytidyl-2-C-methyl-D-erythritol kinase of Trichodesmium erythraeum (strain IMS101).